Reading from the N-terminus, the 380-residue chain is 3-dehydroquinate synthase (380 aa).

NAD(+)-binding positions include 68-73 (PGEPNK), 102-106 (GTVLD), 126-127 (TT), K139, and K148. Zn(2+)-binding residues include E181, H243, and H259.

The protein belongs to the sugar phosphate cyclases superfamily. Dehydroquinate synthase family. NAD(+) serves as cofactor. The cofactor is Co(2+). It depends on Zn(2+) as a cofactor.

The protein resides in the cytoplasm. The enzyme catalyses 7-phospho-2-dehydro-3-deoxy-D-arabino-heptonate = 3-dehydroquinate + phosphate. The protein operates within metabolic intermediate biosynthesis; chorismate biosynthesis; chorismate from D-erythrose 4-phosphate and phosphoenolpyruvate: step 2/7. Its function is as follows. Catalyzes the conversion of 3-deoxy-D-arabino-heptulosonate 7-phosphate (DAHP) to dehydroquinate (DHQ). The polypeptide is 3-dehydroquinate synthase (aroB) (Chlamydia pneumoniae (Chlamydophila pneumoniae)).